Here is a 41-residue protein sequence, read N- to C-terminus: Large ribosomal subunit protein bL36 (41 aa).

It belongs to the bacterial ribosomal protein bL36 family.

In Rickettsia massiliae (strain Mtu5), this protein is Large ribosomal subunit protein bL36.